The sequence spans 361 residues: Protein RecA (361 aa).

Position 68–75 (68–75 (GPESSGKT)) interacts with ATP. Residues 342-361 (PEGAKENISAKDDVAVDTKE) are disordered. Over residues 344-361 (GAKENISAKDDVAVDTKE) the composition is skewed to basic and acidic residues.

Belongs to the RecA family.

It localises to the cytoplasm. Can catalyze the hydrolysis of ATP in the presence of single-stranded DNA, the ATP-dependent uptake of single-stranded DNA by duplex DNA, and the ATP-dependent hybridization of homologous single-stranded DNAs. It interacts with LexA causing its activation and leading to its autocatalytic cleavage. This Clostridium beijerinckii (strain ATCC 51743 / NCIMB 8052) (Clostridium acetobutylicum) protein is Protein RecA.